The chain runs to 164 residues: HTH-type transcriptional regulator IscR (164 aa).

Positions 2–131 (RLTSKGRYAV…NNITLAELVN (130 aa)) constitute an HTH rrf2-type domain. The H-T-H motif DNA-binding region spans 28 to 51 (LADISERQGISLSYLEQLFSRLRK). [2Fe-2S] cluster contacts are provided by cysteine 92, cysteine 98, and cysteine 104. The tract at residues 143–164 (NNDTRRTANGRPQETINVNLRA) is disordered. Residues 152–164 (GRPQETINVNLRA) show a composition bias toward polar residues.

[2Fe-2S] cluster serves as cofactor.

Its function is as follows. Regulates the transcription of several operons and genes involved in the biogenesis of Fe-S clusters and Fe-S-containing proteins. In Yersinia pseudotuberculosis serotype O:1b (strain IP 31758), this protein is HTH-type transcriptional regulator IscR.